A 750-amino-acid polypeptide reads, in one-letter code: GTP pyrophosphokinase rsh (750 aa).

The HD domain occupies 45 to 144 (YFSHPLEVAA…VKLADRLHNM (100 aa)). The 62-residue stretch at 390 to 451 (DQVFCFTPKG…KNGDEVDIIR (62 aa)) folds into the TGS domain. The segment at 587-613 (AAKVDPAATTPKPGKRALPIRGTNPDL) is disordered. One can recognise an ACT domain in the interval 676 to 750 (RISVSAINSP…SVSSAKRVNG (75 aa)).

This sequence belongs to the RelA/SpoT family.

The catalysed reaction is GTP + ATP = guanosine 3'-diphosphate 5'-triphosphate + AMP. In terms of biological role, functions as a (p)ppGpp synthase. In eubacteria ppGpp (guanosine 3'-diphosphate 5'-diphosphate) is a mediator of the stringent response that coordinates a variety of cellular activities in response to changes in nutritional abundance. It is necessary for persistence in mice, essential for intracellular growth of Brucella and required for expression of the type IV secretion system VirB and therefore plays a role in adaptation of Brucella to its intracellular host environment. The polypeptide is GTP pyrophosphokinase rsh (rsh) (Brucella suis biovar 1 (strain 1330)).